The primary structure comprises 507 residues: Histone-lysine N-methyltransferase set-18 (507 aa).

Zn(2+) is bound by residues C49, C52, C65, C68, C74, C78, H86, and C90. The segment at C49–C90 adopts an MYND-type zinc-finger fold.

This sequence belongs to the class V-like SAM-binding methyltransferase superfamily. Histone-lysine methyltransferase family. In terms of tissue distribution, expressed in pharyngeal and body wall muscles.

The enzyme catalyses L-lysyl(36)-[histone H3] + 2 S-adenosyl-L-methionine = N(6),N(6)-dimethyl-L-lysyl(36)-[histone H3] + 2 S-adenosyl-L-homocysteine + 2 H(+). Functionally, histone methyltransferase. Specifically methylates 'Lys-36' of histone H3, inducing di-methylation. Plays a role in modulating lifespan and oxidative stress resistance, in a manner dependent upon daf-16/Forkhead box protein O and the Insulin/IGF-1-like signaling (IIS) mediated pathway. Represses transcription of daf-16 isoform a, perhaps by methylating histone H3 at the daf-16 promoter, which in turn leads to recruitment of histone deacetylases and thus modulation of expression. This Caenorhabditis elegans protein is Histone-lysine N-methyltransferase set-18.